The sequence spans 90 residues: Probable Fe(2+)-trafficking protein (90 aa).

It belongs to the Fe(2+)-trafficking protein family.

In terms of biological role, could be a mediator in iron transactions between iron acquisition and iron-requiring processes, such as synthesis and/or repair of Fe-S clusters in biosynthetic enzymes. This Pseudomonas aeruginosa (strain UCBPP-PA14) protein is Probable Fe(2+)-trafficking protein.